The sequence spans 192 residues: Ion-translocating oxidoreductase complex subunit B (192 aa).

The interval 1-26 (MEMIVIAVVALTLLALLFGMLLGYAS) is hydrophobic. The 4Fe-4S domain maps to 32-91 (EEDPVVDQVDELLPQSQCGQCGYPGCRPYAEAVANNGEQINRCVPGGEPVMQKIATLLNV). Residues Cys-49, Cys-52, Cys-57, Cys-74, Cys-117, Cys-120, Cys-123, Cys-127, Cys-147, Cys-150, Cys-153, and Cys-157 each contribute to the [4Fe-4S] cluster site. 4Fe-4S ferredoxin-type domains follow at residues 108 to 137 (MLAV…GATR) and 138 to 167 (AMHT…LRPA).

Belongs to the 4Fe4S bacterial-type ferredoxin family. RnfB subfamily. The complex is composed of six subunits: RnfA, RnfB, RnfC, RnfD, RnfE and RnfG. The cofactor is [4Fe-4S] cluster.

The protein localises to the cell inner membrane. Part of a membrane-bound complex that couples electron transfer with translocation of ions across the membrane. The chain is Ion-translocating oxidoreductase complex subunit B from Cronobacter sakazakii (strain ATCC BAA-894) (Enterobacter sakazakii).